The primary structure comprises 291 residues: Homoserine kinase (291 aa).

80 to 90 (RPSSGLGSSAA) lines the ATP pocket.

Belongs to the GHMP kinase family. Homoserine kinase subfamily.

The protein localises to the cytoplasm. It catalyses the reaction L-homoserine + ATP = O-phospho-L-homoserine + ADP + H(+). The protein operates within amino-acid biosynthesis; L-threonine biosynthesis; L-threonine from L-aspartate: step 4/5. Catalyzes the ATP-dependent phosphorylation of L-homoserine to L-homoserine phosphate. This Haloquadratum walsbyi (strain DSM 16790 / HBSQ001) protein is Homoserine kinase.